Reading from the N-terminus, the 549-residue chain is Glucose-6-phosphate isomerase (549 aa).

Glutamate 353 acts as the Proton donor in catalysis. Active-site residues include histidine 384 and lysine 513.

The protein belongs to the GPI family.

The protein resides in the cytoplasm. It catalyses the reaction alpha-D-glucose 6-phosphate = beta-D-fructose 6-phosphate. Its pathway is carbohydrate biosynthesis; gluconeogenesis. The protein operates within carbohydrate degradation; glycolysis; D-glyceraldehyde 3-phosphate and glycerone phosphate from D-glucose: step 2/4. Its function is as follows. Catalyzes the reversible isomerization of glucose-6-phosphate to fructose-6-phosphate. The chain is Glucose-6-phosphate isomerase from Brucella ovis (strain ATCC 25840 / 63/290 / NCTC 10512).